Here is a 178-residue protein sequence, read N- to C-terminus: Nuclear transcription factor Y subunit B-2 (178 aa).

Residues 39–45 mediate DNA binding; it reads LPIANIS. The interval 66-77 is subunit association domain (SAD); the sequence is LQECVSEFISFV. The segment at 131-156 is disordered; that stretch reads SSKAGDGSVKKDTIGPHSGASSSSAQ.

Belongs to the NFYB/HAP3 subunit family. As to quaternary structure, heterotrimeric transcription factor composed of three components, NF-YA, NF-YB and NF-YC. NF-YB and NF-YC must interact and dimerize for NF-YA association and DNA binding. Interacts with NFYC4 and NFYC6. Ubiquitous.

It localises to the nucleus. Component of the NF-Y/HAP transcription factor complex. The NF-Y complex stimulates the transcription of various genes by recognizing and binding to a CCAAT motif in promoters. May regulate the expression of photosynthetic genes, and may be involved in chloroplast and amyloplast development. This Oryza sativa subsp. japonica (Rice) protein is Nuclear transcription factor Y subunit B-2 (NFYB2).